The primary structure comprises 1124 residues: uncharacterized protein (1124 aa).

Residues 1–28 (MALFPRSILIALVLSFVLNLGLVTKIHA) form the signal peptide. The next 7 helical transmembrane spans lie at 332 to 352 (IVTAFLTLYVMFFGFKLLLAG), 359 to 379 (EYINFILKIIFVTYFSIGINI), 393 to 413 (MIQWAFPFLLNGINGLASWVM), 495 to 515 (MLVSLALSYPLLVISVAAFMV), 522 to 542 (MISIVILGILAPLFVPMFLFA), 555 to 575 (MISFLLQPMVVVTFMITMFAV), and 700 to 720 (IKNILLALVTACFTLYLMYNF).

The protein belongs to the TrbL/VirB6 family.

It localises to the cell membrane. This is an uncharacterized protein from Rickettsia prowazekii (strain Madrid E).